The chain runs to 63 residues: Large ribosomal subunit protein uL29 (63 aa).

The protein belongs to the universal ribosomal protein uL29 family.

The protein is Large ribosomal subunit protein uL29 of Flavobacterium johnsoniae (strain ATCC 17061 / DSM 2064 / JCM 8514 / BCRC 14874 / CCUG 350202 / NBRC 14942 / NCIMB 11054 / UW101) (Cytophaga johnsonae).